The sequence spans 95 residues: Integration host factor subunit beta (95 aa).

Residues 56–76 form a disordered region; the sequence is RAPRTGRNPKTGTSVELDGKY.

It belongs to the bacterial histone-like protein family. In terms of assembly, heterodimer of an alpha and a beta chain.

Its function is as follows. This protein is one of the two subunits of integration host factor, a specific DNA-binding protein that functions in genetic recombination as well as in transcriptional and translational control. This Shewanella woodyi (strain ATCC 51908 / MS32) protein is Integration host factor subunit beta.